The chain runs to 483 residues: Glutamate--tRNA ligase (483 aa).

Positions 11 to 21 match the 'HIGH' region motif; sequence PSPTGLLHIGN. Positions 255-259 match the 'KMSKS' region motif; sequence KLSKR. Lys258 is a binding site for ATP.

Belongs to the class-I aminoacyl-tRNA synthetase family. Glutamate--tRNA ligase type 1 subfamily. As to quaternary structure, monomer.

The protein localises to the cytoplasm. It carries out the reaction tRNA(Glu) + L-glutamate + ATP = L-glutamyl-tRNA(Glu) + AMP + diphosphate. Catalyzes the attachment of glutamate to tRNA(Glu) in a two-step reaction: glutamate is first activated by ATP to form Glu-AMP and then transferred to the acceptor end of tRNA(Glu). This chain is Glutamate--tRNA ligase, found in Lactococcus lactis subsp. cremoris (strain MG1363).